A 273-amino-acid chain; its full sequence is HMP-PP phosphatase (273 aa).

The Nucleophile role is filled by Asp-8. Positions 8, 10, and 212 each coordinate Mg(2+).

The protein belongs to the HAD-like hydrolase superfamily. Cof family. Mg(2+) serves as cofactor.

The catalysed reaction is 4-amino-2-methyl-5-(diphosphooxymethyl)pyrimidine + H2O = 4-amino-2-methyl-5-(phosphooxymethyl)pyrimidine + phosphate + H(+). Functionally, catalyzes the hydrolysis of 4-amino-2-methyl-5-hydroxymethylpyrimidine pyrophosphate (HMP-PP) to 4-amino-2-methyl-5-hydroxymethylpyrimidine phosphate (HMP-P). In Yersinia pseudotuberculosis serotype O:1b (strain IP 31758), this protein is HMP-PP phosphatase.